Here is a 151-residue protein sequence, read N- to C-terminus: SsrA-binding protein (151 aa).

The segment at 131–151 is disordered; that stretch reads KRESIKEKDWKRDQSRLIRQK.

It belongs to the SmpB family.

Its subcellular location is the cytoplasm. Its function is as follows. Required for rescue of stalled ribosomes mediated by trans-translation. Binds to transfer-messenger RNA (tmRNA), required for stable association of tmRNA with ribosomes. tmRNA and SmpB together mimic tRNA shape, replacing the anticodon stem-loop with SmpB. tmRNA is encoded by the ssrA gene; the 2 termini fold to resemble tRNA(Ala) and it encodes a 'tag peptide', a short internal open reading frame. During trans-translation Ala-aminoacylated tmRNA acts like a tRNA, entering the A-site of stalled ribosomes, displacing the stalled mRNA. The ribosome then switches to translate the ORF on the tmRNA; the nascent peptide is terminated with the 'tag peptide' encoded by the tmRNA and targeted for degradation. The ribosome is freed to recommence translation, which seems to be the essential function of trans-translation. The protein is SsrA-binding protein of Rickettsia bellii (strain OSU 85-389).